Reading from the N-terminus, the 477-residue chain is Probable ribonuclease FAU-1 (477 aa).

This sequence belongs to the FAU-1 family.

Probable RNase involved in rRNA stability through maturation and/or degradation of precursor rRNAs. Binds to RNA in loop regions with AU-rich sequences. The protein is Probable ribonuclease FAU-1 of Staphylothermus marinus (strain ATCC 43588 / DSM 3639 / JCM 9404 / F1).